A 265-amino-acid polypeptide reads, in one-letter code: 3-methyl-2-oxobutanoate hydroxymethyltransferase (265 aa).

The Mg(2+) site is built by aspartate 45 and aspartate 84. 3-methyl-2-oxobutanoate is bound by residues 45–46, aspartate 84, and lysine 112; that span reads DS. Residue glutamate 114 coordinates Mg(2+). The Proton acceptor role is filled by glutamate 181.

It belongs to the PanB family. Homodecamer; pentamer of dimers. Mg(2+) is required as a cofactor.

The protein resides in the cytoplasm. It carries out the reaction 3-methyl-2-oxobutanoate + (6R)-5,10-methylene-5,6,7,8-tetrahydrofolate + H2O = 2-dehydropantoate + (6S)-5,6,7,8-tetrahydrofolate. It participates in cofactor biosynthesis; (R)-pantothenate biosynthesis; (R)-pantoate from 3-methyl-2-oxobutanoate: step 1/2. In terms of biological role, catalyzes the reversible reaction in which hydroxymethyl group from 5,10-methylenetetrahydrofolate is transferred onto alpha-ketoisovalerate to form ketopantoate. This is 3-methyl-2-oxobutanoate hydroxymethyltransferase from Pectobacterium carotovorum subsp. carotovorum (strain PC1).